Reading from the N-terminus, the 348-residue chain is Fe-S cluster assembly protein DRE2 (348 aa).

An N-terminal SAM-like domain region spans residues 1-158 (MSQYKTGLLL…LPTFKKASSS (158 aa)). A disordered region spans residues 137-170 (KTNNTKLQSGSKLPTFKKASSSTSNLPSFKKADH). Over residues 144 to 163 (QSGSKLPTFKKASSSTSNLP) the composition is skewed to polar residues. A linker region spans residues 159 to 242 (TSNLPSFKKA…EEELIDEDGS (84 aa)). The residue at position 206 (serine 206) is a Phosphoserine. Cysteine 252, cysteine 263, cysteine 266, and cysteine 268 together coordinate [2Fe-2S] cluster. The tract at residues 252–268 (CGKSKTKKKKACKDCTC) is fe-S binding site A. Residues cysteine 311, cysteine 314, cysteine 322, and cysteine 325 each coordinate [4Fe-4S] cluster. Short sequence motifs (cx2C motif) lie at residues 311-314 (CGSC) and 322-325 (CSGC). Positions 311 to 325 (CGSCSLGDAFRCSGC) are fe-S binding site B.

It belongs to the anamorsin family. Monomer. Interacts with TAH18. Interacts with MIA40. Requires [2Fe-2S] cluster as cofactor. It depends on [4Fe-4S] cluster as a cofactor. In terms of processing, ubiquitinated.

It localises to the cytoplasm. The protein localises to the mitochondrion intermembrane space. Functionally, component of the cytosolic iron-sulfur (Fe-S) protein assembly (CIA) machinery required for the maturation of extramitochondrial Fe-S proteins. Part of an electron transfer chain functioning in an early step of cytosolic Fe-S biogenesis, facilitating the de novo assembly of a [4Fe-4S] cluster on the scaffold complex CFD1-NBP35. Electrons are transferred to DRE2 from NADPH via the FAD- and FMN-containing protein TAH18. TAH18-DRE2 are also required for the assembly of the diferric tyrosyl radical cofactor of ribonucleotide reductase (RNR), probably by providing electrons for reduction during radical cofactor maturation in the catalytic small subunit RNR2. Has anti-apoptotic effects in the cell. Involved in negative control of H(2)O(2)-induced cell death. The chain is Fe-S cluster assembly protein DRE2 from Saccharomyces cerevisiae (strain ATCC 204508 / S288c) (Baker's yeast).